The sequence spans 515 residues: Monocarboxylate transporter 10 (515 aa).

The segment at 1-48 (MVLSQEEPDSARGTSEAQPLGPAPTGAAPPPGPGPSDSPEAAVEKVEV) is disordered. At 1-66 (MVLSQEEPDS…EPHEPPEPPE (66 aa)) the chain is on the cytoplasmic side. Low complexity predominate over residues 17–26 (AQPLGPAPTG). Positions 27–36 (AAPPPGPGPS) are enriched in pro residues. Residues 67–87 (GGWGWLVMLAAMWCNGSVFGI) traverse the membrane as a helical segment. Over 88–114 (QNACGVLFVSMLETFGSKDDDKMVFKT) the chain is Extracellular. The helical transmembrane segment at 115-135 (AWVGSLSMGMIFFCCPIVSVF) threads the bilayer. At 136 to 144 (TDLFGCRKT) the chain is on the cytoplasmic side. Residues 145 to 165 (AVVGAAVGFVGLMSSSFVSSI) traverse the membrane as a helical segment. The Extracellular segment spans residues 166 to 171 (EPLYLT). A helical membrane pass occupies residues 172–192 (YGIIFACGCSFAYQPSLVILG). Over 193–200 (HYFKKRLG) the chain is Cytoplasmic. A helical transmembrane segment spans residues 201-221 (LVNGIVTAGSSVFTILLPLLL). The Extracellular segment spans residues 222-228 (RVLIDSV). The chain crosses the membrane as a helical span at residues 229-249 (GLFYTLRVLCIFMFVLFLAGF). The Cytoplasmic portion of the chain corresponds to 250 to 291 (TYRPLATSTKDKESGGSGSSLFSRKKFSPPKKIFNFAIFKVT). Ser-263 carries the phosphoserine modification. A helical membrane pass occupies residues 292–312 (AYAVWAVGIPLALFGYFVPYV). Topologically, residues 313 to 329 (HLMKHVNERFQDEKNKE) are extracellular. The chain crosses the membrane as a helical span at residues 330-350 (VVLMCIGVTSGVGRLLFGRIA). A topological domain (cytoplasmic) is located at residue Asp-351. Residues 352–372 (YVPGVKKVYLQVLSFFFIGLM) traverse the membrane as a helical segment. The Extracellular segment spans residues 373–396 (SMMIPLCSIFGALIAVCLIMGLFD). Residues 397–417 (GCFISIMAPIAFELVGAQDVS) form a helical membrane-spanning segment. Topologically, residues 418–419 (QA) are cytoplasmic. A helical membrane pass occupies residues 420-440 (IGFLLGFMSIPMTVGPPIAGL). The Extracellular segment spans residues 441-451 (LRDKLGSYDVA). Residues 452 to 472 (FYLAGVPPLIGGAVLCFIPWI) form a helical membrane-spanning segment. Topologically, residues 473–515 (HSKKQREISKTTGKEKMEKMLENQNSLLSSSSGMFKKESDSII) are cytoplasmic. Phosphoserine is present on residues Ser-498, Ser-501, Ser-503, and Ser-504.

The protein belongs to the major facilitator superfamily. Monocarboxylate porter (TC 2.A.1.13) family. Not N-glycosylated. Strongly expressed in kidney and skeletal muscle and at lower level in placenta and heart.

It is found in the cell membrane. The protein resides in the basolateral cell membrane. The catalysed reaction is 3,3',5-triiodo-L-thyronine(out) = 3,3',5-triiodo-L-thyronine(in). It catalyses the reaction L-thyroxine(out) = L-thyroxine(in). It carries out the reaction L-tryptophan(in) = L-tryptophan(out). The enzyme catalyses L-tyrosine(in) = L-tyrosine(out). The catalysed reaction is L-phenylalanine(in) = L-phenylalanine(out). Functionally, sodium- and proton-independent thyroid hormones and aromatic acids transporter. Mediates both uptake and efflux of 3,5,3'-triiodothyronine (T3) and 3,5,3',5'-tetraiodothyronine (T4) with high affinity, suggesting a role in the homeostasis of thyroid hormone levels. Responsible for low affinity bidirectional transport of the aromatic amino acids, such as phenylalanine, tyrosine, tryptophan and L-3,4-dihydroxyphenylalanine (L-dopa). Plays an important role in homeostasis of aromatic amino acids. The sequence is that of Monocarboxylate transporter 10 (SLC16A10) from Homo sapiens (Human).